The sequence spans 404 residues: Serine/threonine transporter SstT (404 aa).

Helical transmembrane passes span 17–37 (IGIGVVIGLLLGILLPDVTAI), 39–59 (ILGQLFVGALKAIAPLLVFAL), 75–95 (MTLIIVLYLLGTFLAALVAVI), 138–158 (ALATANYIGVLAWALIFGLAL), 179–199 (IVVWIINVAPIGIMGLVFSTV), 212–232 (LLILVLVGTMLFVALVVNPLL), 287–307 (IPLGAMINMGGAAITINVLTL), 319–339 (FLTALLLSVVAAISACGASGV), and 354–374 (FGISSDLAMQVVGVGFIVGVI).

It belongs to the dicarboxylate/amino acid:cation symporter (DAACS) (TC 2.A.23) family.

It localises to the cell membrane. The catalysed reaction is L-serine(in) + Na(+)(in) = L-serine(out) + Na(+)(out). It carries out the reaction L-threonine(in) + Na(+)(in) = L-threonine(out) + Na(+)(out). Involved in the import of serine and threonine into the cell, with the concomitant import of sodium (symport system). The chain is Serine/threonine transporter SstT from Streptococcus equi subsp. equi (strain 4047).